Here is a 49-residue protein sequence, read N- to C-terminus: MRVKVTLACTECKQRNYNTMKNKKNDPNRIEMKKYCKFCKTHTLHRETK.

Belongs to the bacterial ribosomal protein bL33 family.

The protein is Large ribosomal subunit protein bL33 of Clostridium perfringens (strain ATCC 13124 / DSM 756 / JCM 1290 / NCIMB 6125 / NCTC 8237 / Type A).